The sequence spans 1336 residues: MIDVNFFDELRIGLATADDIRRWSKGEVKKPETINYRTLKPEKDGLFCERIFGPTRDWECACGKYKRVRYKGIICERCGVEVTKSKVRRERMGHIELAAPVTHIWYFKGVPSRLGYLLDLAPKDLERIIYFAANIITSVDDEARHADQTTLEAEMLLEKKDVEADMESEIAERAAKLEEDLAELEAAGAKADARNKVKKAAEKEMQHIRERAEREIDRLEEIWQTFIKLAPKQMIIDETIYEELVDRYEDYFTGGMGAEAIQTLIRNFDLDSEAEELREIINNGKGQKKMRALKRLKVVAAFQRSGNDPAGMVLDCIPVIPPELRPMVQLDGGRFATSDLNDLYRRVINRNNRLKRMIELGAPEIIVNNEKRMLQESVDALFDNGRRGRPVTGPGNRPLKSLSDLLKGKQGRFRQNLLGKRVDYSGRSVIIVGPQLKLHECGLPKLMALELFKPFVMKRLVENDYAQNIKSAKRMVERQRPEVWDVLEEAISEHPVMLNRAPTLHRLGIQAFEPKLVEGKAIQLHPLACEAFNADFDGDQMAVHLPLSAEAQAEARILMLASNNILSPASGKPLAMPRLDMVTGLYYLTMDKNENEIGGQGAYASATEEGPAQGVYSSYAEAIMARDRGVLGLQAKIKVRISHLRPPVDIEAEQFPEGWNKGDVWLADTTLGRIMFNELLPWNYPYLEGVMVRKGGGTGKIMLGDVINDLAATYPMITVAQTMDKMKDAGFYWATRSGVTITMSDVLVLPNKEEILDRYEAEARKIERKYWEQGALTERERYDRLVELWKDATDEVGNAVEKLYPDDNPIPMIVKSGAAGNMRQIWTLAGMKGMVVNSKGDYITRPIKTSFREGLSVLEYFNNSHGSRKGLADTALRTADSGYLTRRLVDVAQDVIVREDDCGTKQGIRVPVAVEVKDAEGNVTGYTGHSLIETSVAGRVAATAVKDAEGNVMVEPGENLTDQLIDELIAAGVKEVKVRSVLTCQTPTGVCAKCYGKSMATGKLVDIGEAVGIVAAQSIGEPGTQLTMRTFHQGGVGGDITGGLPRVQELFEARVPKNRAPIASVAGTVHLDDEGNFYTLTINPDDGSDVVVYEKLSKRQGLATVRVPMESNPGAMIERTLAEGDHVEVGDRLLRGPADPHDVLEVLGRRGVEQHLVDEVQDVYRAQGVAIHDKHIEIIIRQMLRRGTVIESGSTEFLPGTLVDLSEAKAANAEALANGGQPAELRSEIMGITKASLATESWLSAASFQETTRVLTDAAINKRSDKLIGLKENVIIGKLIPAGTGISRYRNISVKPTEAARNAAYSIPTYGDSIYGDDGYGEFTGASVPLDEAYDL.

Zn(2+) contacts are provided by Cys60, Cys62, Cys75, and Cys78. 3 residues coordinate Mg(2+): Asp535, Asp537, and Asp539. Residues Cys902, Cys984, Cys991, and Cys994 each contribute to the Zn(2+) site.

It belongs to the RNA polymerase beta' chain family. In terms of assembly, the RNAP catalytic core consists of 2 alpha, 1 beta, 1 beta' and 1 omega subunit. When a sigma factor is associated with the core the holoenzyme is formed, which can initiate transcription. Mg(2+) is required as a cofactor. It depends on Zn(2+) as a cofactor.

The catalysed reaction is RNA(n) + a ribonucleoside 5'-triphosphate = RNA(n+1) + diphosphate. In terms of biological role, DNA-dependent RNA polymerase catalyzes the transcription of DNA into RNA using the four ribonucleoside triphosphates as substrates. In Corynebacterium diphtheriae (strain ATCC 700971 / NCTC 13129 / Biotype gravis), this protein is DNA-directed RNA polymerase subunit beta'.